Reading from the N-terminus, the 74-residue chain is Small integral membrane protein 15 (74 aa).

The helical transmembrane segment at Tyr-20–Leu-40 threads the bilayer. Positions Trp-42–Asp-74 form a coiled coil. Over residues Arg-53–Ala-66 the composition is skewed to basic and acidic residues. Positions Arg-53 to Asp-74 are disordered.

It belongs to the SMIM15 family.

It is found in the membrane. The chain is Small integral membrane protein 15 (smim15) from Danio rerio (Zebrafish).